Consider the following 972-residue polypeptide: Isoleucine--tRNA ligase (972 aa).

Residues proline 63–histidine 73 carry the 'HIGH' region motif. Glutamate 603 serves as a coordination point for L-isoleucyl-5'-AMP. Residues lysine 644–serine 648 carry the 'KMSKS' region motif. Lysine 647 contributes to the ATP binding site.

Belongs to the class-I aminoacyl-tRNA synthetase family. IleS type 1 subfamily. Monomer.

It localises to the cytoplasm. The enzyme catalyses tRNA(Ile) + L-isoleucine + ATP = L-isoleucyl-tRNA(Ile) + AMP + diphosphate. In terms of biological role, catalyzes the attachment of isoleucine to tRNA(Ile). As IleRS can inadvertently accommodate and process structurally similar amino acids such as valine, to avoid such errors it has two additional distinct tRNA(Ile)-dependent editing activities. One activity is designated as 'pretransfer' editing and involves the hydrolysis of activated Val-AMP. The other activity is designated 'posttransfer' editing and involves deacylation of mischarged Val-tRNA(Ile). This Brucella suis biovar 1 (strain 1330) protein is Isoleucine--tRNA ligase.